Consider the following 129-residue polypeptide: Protein yippee-like At5g53940 (129 aa).

The Yippee domain maps to R12–I109. Residues C16, C19, C72, and C75 each coordinate Zn(2+).

It belongs to the yippee family.

The polypeptide is Protein yippee-like At5g53940 (Arabidopsis thaliana (Mouse-ear cress)).